The chain runs to 288 residues: Probable ketoamine kinase VC_1539 (288 aa).

Residue 92 to 94 (NYL) participates in ATP binding. The active-site Proton acceptor is aspartate 195.

This sequence belongs to the fructosamine kinase family.

Functionally, ketoamine kinase that phosphorylates ketoamines on the third carbon of the sugar moiety to generate ketoamine 3-phosphate. The protein is Probable ketoamine kinase VC_1539 of Vibrio cholerae serotype O1 (strain ATCC 39315 / El Tor Inaba N16961).